Reading from the N-terminus, the 270-residue chain is Regulator of G-protein signaling rgs-10 (270 aa).

Residues 135–252 (SPETLAASEY…LEDPLYLDLV (118 aa)) form the RGS domain.

Functionally, shown to have a role in viability and embryogenesis. This is Regulator of G-protein signaling rgs-10 (rgs-10) from Caenorhabditis elegans.